Here is an 820-residue protein sequence, read N- to C-terminus: Potassium channel GORK (820 aa).

The Cytoplasmic portion of the chain corresponds to 1–69 (MGRLRRRQEI…PKNRWYKAWE (69 aa)). A helical membrane pass occupies residues 70 to 90 (MFILVWAIYSSLFTPMEFGFF). Over 91–97 (RGLPERL) the chain is Extracellular. A helical transmembrane segment spans residues 98 to 118 (FVLDIVGQIAFLVDIVLQFFV). Residues 119–141 (AYRDTQTYRTVYKPTRIAFRYLK) are Cytoplasmic-facing. The helical transmembrane segment at 142–162 (SHFLMDFIGCFPWDLIYKASG) threads the bilayer. Over 163–168 (KHELVR) the chain is Extracellular. A helical; Voltage-sensor transmembrane segment spans residues 169–189 (YLLWIRLFRVRKVVEFFQRLE). Residues 190-203 (KDTRINYLFTRILK) lie on the Cytoplasmic side of the membrane. A helical membrane pass occupies residues 204 to 224 (LLFVEVYCTHTAACIFYYLAT). Topologically, residues 225 to 259 (TLPPENEGYTWIGSLKLGDYSYENFREIDLWKRYT) are extracellular. An intramembrane region (pore-forming) is located at residues 260–279 (TALYFAIVTMATVGYGDIHA). At 280-285 (VNLREM) the chain is on the extracellular side. The chain crosses the membrane as a helical span at residues 286 to 306 (IFVMIYVSFDMVLGAYLIGNI). Residues 307–820 (TALIVKGSNT…YMISDTTDQT (514 aa)) are Cytoplasmic-facing. 386-508 (LFKGCSTEFI…ILNNIMEEKE (123 aa)) serves as a coordination point for a nucleoside 3',5'-cyclic phosphate. ANK repeat units follow at residues 528–559 (EAEL…DPNK), 563–592 (DGRS…DVNL), 596–625 (FGHT…SFNL), 627–656 (DSGN…NPNS), 660–689 (DHRT…SVIS), and 693–722 (WGNS…AQSS). Positions 740–820 (KCTVFPFHPQ…YMISDTTDQT (81 aa)) constitute a KHA domain.

Belongs to the potassium channel family. Plant (TC 1.A.1.4) subfamily. The potassium channel is probably composed of a homo- or heterotetrameric complex of pore-forming subunits. In terms of tissue distribution, expressed in guard cell-containing tissues, in root epidermal cells and in root hairs. Detected in vascular cells of the root and shoot.

Its subcellular location is the membrane. Functionally, major selective outward-rectifying potassium channel of the guard cell membrane. Involved in regulation of stomatal movements according to the water status. Assuming opened or closed conformations in response to the voltage difference across the membrane, the channel is activated by depolarization. Conductance of the channel is modulated in a potassium-dependent fashion. May interact with the cytoskeleton or with regulatory proteins. This Arabidopsis thaliana (Mouse-ear cress) protein is Potassium channel GORK (GORK).